The chain runs to 152 residues: MLP-like protein 165 (152 aa).

This sequence belongs to the MLP family.

The protein is MLP-like protein 165 (MLP165) of Arabidopsis thaliana (Mouse-ear cress).